A 683-amino-acid polypeptide reads, in one-letter code: PTS system mannose-specific EIIBCA component (683 aa).

One can recognise a PTS EIIB type-1 domain in the interval 1–89; the sequence is MASKLTTTSQ…LKLDGMKHFA (89 aa). The active-site Phosphocysteine intermediate; for EIIB activity is the cysteine 28. Residues 117-476 enclose the PTS EIIC type-1 domain; sequence EFLSDTFRPI…NEERDEARAK (360 aa). 10 helical membrane-spanning segments follow: residues 126–146, 162–182, 193–213, 225–245, 260–280, 303–323, 344–364, 376–396, 409–429, and 442–462; these read ILWA…ADTF, YVFL…MVGA, WIGA…LGSA, VLND…GLYW, MVFV…FLLG, FILS…GLHW, PMGA…LLSI, LGGM…YGVL, GCLA…AFVF, and LGYT…VLAL. The PTS EIIA type-1 domain occupies 550–654; that stretch reads DPIFAAGKLG…PLITPVVVSN (105 aa). Catalysis depends on histidine 602, which acts as the Tele-phosphohistidine intermediate; for EIIA activity.

Its subcellular location is the cell membrane. It catalyses the reaction D-mannose(out) + N(pros)-phospho-L-histidyl-[protein] = D-mannose 6-phosphate(in) + L-histidyl-[protein]. Its function is as follows. The phosphoenolpyruvate-dependent sugar phosphotransferase system (sugar PTS), a major carbohydrate active -transport system, catalyzes the phosphorylation of incoming sugar substrates concomitantly with their translocation across the cell membrane. This system is involved in mannose transport. The chain is PTS system mannose-specific EIIBCA component (ptsM) from Corynebacterium glutamicum (strain ATCC 13032 / DSM 20300 / JCM 1318 / BCRC 11384 / CCUG 27702 / LMG 3730 / NBRC 12168 / NCIMB 10025 / NRRL B-2784 / 534).